Reading from the N-terminus, the 701-residue chain is Epithelial splicing regulatory protein 2 (701 aa).

RRM domains follow at residues 226-303, 327-407, and 448-523; these read TVIR…KATG, VIIR…RSTA, and CVRL…VEVF.

It belongs to the ESRP family.

The protein localises to the nucleus. In terms of biological role, mRNA splicing factor that regulates the formation of epithelial cell-specific isoforms. Specifically regulates the expression of FGFR2-IIIb, an epithelial cell-specific isoform of FGFR2. Acts by directly binding specific sequences in mRNAs. Binds the GU-rich sequence motifs in the ISE/ISS-3, a cis-element regulatory region present in the mRNA of FGFR2. The chain is Epithelial splicing regulatory protein 2 (ESRP2) from Gallus gallus (Chicken).